Reading from the N-terminus, the 323-residue chain is Annexin A3 (323 aa).

At A2 the chain carries N-acetylalanine. Annexin repeat units follow at residues 18 to 89, 90 to 161, 173 to 245, and 249 to 320; these read FSPS…ALVT, APAL…TLAD, HLAK…AIVH, and NTPA…KICG. K177 bears the N6-acetyllysine mark. T267 carries the post-translational modification Phosphothreonine.

This sequence belongs to the annexin family.

Inhibitor of phospholipase A2, also possesses anti-coagulant properties. The protein is Annexin A3 (Anxa3) of Mus musculus (Mouse).